The sequence spans 467 residues: Argininosuccinate lyase (467 aa).

Belongs to the lyase 1 family. Argininosuccinate lyase subfamily.

The protein localises to the cytoplasm. The catalysed reaction is 2-(N(omega)-L-arginino)succinate = fumarate + L-arginine. Its pathway is amino-acid biosynthesis; L-arginine biosynthesis; L-arginine from L-ornithine and carbamoyl phosphate: step 3/3. This chain is Argininosuccinate lyase, found in Rhizobium etli (strain ATCC 51251 / DSM 11541 / JCM 21823 / NBRC 15573 / CFN 42).